We begin with the raw amino-acid sequence, 283 residues long: Bifunctional protein FolD (283 aa).

Residues 165–167 (GRG), T192, and V233 contribute to the NADP(+) site.

Belongs to the tetrahydrofolate dehydrogenase/cyclohydrolase family. Homodimer.

It catalyses the reaction (6R)-5,10-methylene-5,6,7,8-tetrahydrofolate + NADP(+) = (6R)-5,10-methenyltetrahydrofolate + NADPH. It carries out the reaction (6R)-5,10-methenyltetrahydrofolate + H2O = (6R)-10-formyltetrahydrofolate + H(+). The protein operates within one-carbon metabolism; tetrahydrofolate interconversion. Its function is as follows. Catalyzes the oxidation of 5,10-methylenetetrahydrofolate to 5,10-methenyltetrahydrofolate and then the hydrolysis of 5,10-methenyltetrahydrofolate to 10-formyltetrahydrofolate. The chain is Bifunctional protein FolD from Thermobifida fusca (strain YX).